Here is a 563-residue protein sequence, read N- to C-terminus: Mitochondrial distribution and morphology protein 34 (563 aa).

One can recognise an SMP-LTD domain in the interval M1–L195. 2 disordered regions span residues E298–T460 and R535–L563. Polar residues-rich tracts occupy residues A303–R332 and S346–L357. Positions S365 to S383 are enriched in basic residues. Polar residues-rich tracts occupy residues T386–A402 and P444–T460.

Belongs to the MDM34 family. In terms of assembly, component of the ER-mitochondria encounter structure (ERMES) or MDM complex, composed of mmm1, mdm10, mdm12 and mdm34.

The protein resides in the mitochondrion outer membrane. In terms of biological role, component of the ERMES/MDM complex, which serves as a molecular tether to connect the endoplasmic reticulum (ER) and mitochondria. Components of this complex are involved in the control of mitochondrial shape and protein biogenesis, and function in nonvesicular lipid trafficking between the ER and mitochondria. Mdm34 is required for the interaction of the ER-resident membrane protein mmm1 and the outer mitochondrial membrane-resident beta-barrel protein mdm10. This Sclerotinia sclerotiorum (strain ATCC 18683 / 1980 / Ss-1) (White mold) protein is Mitochondrial distribution and morphology protein 34.